Consider the following 205-residue polypeptide: Nitrophorin-4 (205 aa).

An N-terminal signal peptide occupies residues 1-21 (MKSYTSLLAVAILCLFGGVNG). 2 disulfides stabilise this stretch: C23/C143 and C62/C192. H80 is a heme binding site.

This sequence belongs to the calycin superfamily. Nitrophorin family. Requires heme b as cofactor. As to expression, salivary gland (at protein level).

The protein resides in the secreted. The enzyme catalyses 3 nitrite + 2 H(+) = 2 nitric oxide + nitrate + H2O. Functionally, heme-based protein that delivers nitric oxide gas (NO) to the victim while feeding, resulting in vasodilation and inhibition of platelet aggregation. Reversibly binds nitric oxide (NO). Also binds tightly to histamine, which is released by the host to induce wound healing. NO release is pH dependent and linked to loop dynamics. The protein is Nitrophorin-4 of Rhodnius prolixus (Triatomid bug).